The sequence spans 86 residues: UPF0335 protein BruAb1_1737 (86 aa).

This sequence belongs to the UPF0335 family.

The sequence is that of UPF0335 protein BruAb1_1737 from Brucella abortus biovar 1 (strain 9-941).